The chain runs to 55 residues: Lantibiotic epilancin (55 aa).

Residues 1–24 (MNNSLFDLNLNKGVETQKSDLSPQ) constitute a propeptide, cleaved by ElxP. The residue at position 25 (Ser25) is a D-lactate; by the dehydratase ElxB and the dehydrogenase ElxO. Position 27 is a 2,3-didehydroalanine (Ser); by the dehydratase ElxB (Ser27). Thr31 bears the 2,3-didehydrobutyrine; by the dehydratase ElxB mark. Ser32 carries the post-translational modification 2,3-didehydroalanine (Ser); by the dehydratase ElxB. The segment at residues 36-40 (SKKYC) is a cross-link (lanthionine (Ser-Cys); by the dehydratase ElxB and the cyclase ElxC). 2 cross-links (beta-methyllanthionine (Thr-Cys); by the dehydratase ElxB and the cyclase ElxC) span residues 44 to 47 (TLTC) and 46 to 49 (TCGC). The residue at position 52 (Thr52) is a 2,3-didehydrobutyrine; by the dehydratase ElxB.

This sequence belongs to the type A lantibiotic family. Post-translationally, maturation of this lantibiotic involves the enzymatic conversion of Thr, and Ser into dehydrated AA by ElxB and the formation of thioether bonds with cysteine by the cyclase ElxC. The next steps are cleavage of the leader peptide by ElxP and membrane translocation by ElxT. The leader peptide may be removed before membrane translocation, in contrast to other lantibiotics for which the cleavage occur after translocation. This is suggested by the probable cytoplasmic localization of the serine protease ElxP that cleaves the leader peptide. In terms of processing, it is not established whether the 2,3-didehydrobutyrine is the E- or Z-isomer. The N-terminal D-lactate is probably produced by dehydration of Ser-25 by ElxB, followed by proteolytic removal of the leader peptide by the serine protease ElxP and hydrolysis of the resulting new N-terminal dehydroalanine. This hydrolysis may occur spontaneously. The pyruvate group thus formed is reduced to D-lactate by the NADPH-dependent oxidoreductase ElxO. This N-terminal D-lactate protects the lantibiotic against degradation against aminopeptidase.

Functionally, lanthionine-containing peptide antibiotic (lantibiotic) active on Gram-positive bacteria such as staphylococci, enterococci and streptococci. The bactericidal activity of lantibiotics is based on depolarization of energized bacterial cytoplasmic membranes, initiated by the formation of aqueous transmembrane pores. In Staphylococcus epidermidis, this protein is Lantibiotic epilancin (elkA).